A 486-amino-acid chain; its full sequence is UDP-N-acetylmuramate--L-alanine ligase (486 aa).

An ATP-binding site is contributed by 123–129; the sequence is GTHGKTT.

The protein belongs to the MurCDEF family.

It is found in the cytoplasm. The catalysed reaction is UDP-N-acetyl-alpha-D-muramate + L-alanine + ATP = UDP-N-acetyl-alpha-D-muramoyl-L-alanine + ADP + phosphate + H(+). It participates in cell wall biogenesis; peptidoglycan biosynthesis. Cell wall formation. This chain is UDP-N-acetylmuramate--L-alanine ligase, found in Pseudomonas savastanoi pv. phaseolicola (strain 1448A / Race 6) (Pseudomonas syringae pv. phaseolicola (strain 1448A / Race 6)).